Here is a 513-residue protein sequence, read N- to C-terminus: Mannan endo-1,4-beta-mannosidase A and B (513 aa).

A signal peptide spans 1–26 (MKVYKKVAFVMAFIMFFSVLPTISMS). One can recognise a GH26 domain in the interval 41-353 (QTTKNVYSWL…FNDSWVVNRG (313 aa)). H132 is a substrate binding site. E195 acts as the Proton donor in catalysis. W200 and Y270 together coordinate substrate. E295 functions as the Nucleophile in the catalytic mechanism. 429 to 430 (IK) contacts substrate.

Belongs to the glycosyl hydrolase 26 family.

It localises to the secreted. The enzyme catalyses Random hydrolysis of (1-&gt;4)-beta-D-mannosidic linkages in mannans, galactomannans and glucomannans.. Functionally, could be involved in the degradation of glucomannan and catalyzes the endo hydrolysis of beta-1,4-linked mannan, galactomannan and glucomannan. This Caldalkalibacillus mannanilyticus (strain DSM 16130 / CIP 109019 / JCM 10596 / AM-001) (Bacillus mannanilyticus) protein is Mannan endo-1,4-beta-mannosidase A and B.